The following is a 545-amino-acid chain: Threonine--tRNA ligase catalytic subunit (545 aa).

The catalytic stretch occupies residues 139–433 (DHRLIGEKLD…LLEHFKGKLP (295 aa)). 3 residues coordinate Zn(2+): C231, H282, and H410.

It belongs to the class-II aminoacyl-tRNA synthetase family. Homodimer. Probably interacts with its editing subunit. Zn(2+) is required as a cofactor.

Its subcellular location is the cytoplasm. The enzyme catalyses tRNA(Thr) + L-threonine + ATP = L-threonyl-tRNA(Thr) + AMP + diphosphate + H(+). Its function is as follows. Catalyzes the attachment of threonine to tRNA(Thr) in a two-step reaction: L-threonine is first activated by ATP to form Thr-AMP and then transferred to the acceptor end of tRNA(Thr). Also activates L-serine and transfers it to tRNA(Thr) but cannot deacylate incorrectly charged amino acid; unlike most archaea the editing function is found in a freestanding protein. This chain is Threonine--tRNA ligase catalytic subunit, found in Saccharolobus islandicus (strain M.16.27) (Sulfolobus islandicus).